The following is a 341-amino-acid chain: HTH-type transcriptional repressor PurR (341 aa).

The HTH lacI-type domain occupies 2–56 (ATIKDVAKHAGVSTTTVSHVINKTRFVAEDTKAAVWAAIKALNYSPSAVARSLKV). The segment at residues 4 to 23 (IKDVAKHAGVSTTTVSHVIN) is a DNA-binding region (H-T-H motif). The DNA-binding element occupies 48 to 56 (SAVARSLKV). Hypoxanthine contacts are provided by Y73, R190, T192, F221, and D275.

In terms of assembly, homodimer.

It participates in purine metabolism; purine nucleotide biosynthesis [regulation]. Is the main repressor of the genes involved in the de novo synthesis of purine nucleotides, regulating purB, purC, purEK, purF, purHD, purL, purMN and guaBA expression. PurR is allosterically activated to bind its cognate DNA by binding the purine corepressors, hypoxanthine or guanine, thereby effecting transcription repression. This Photorhabdus laumondii subsp. laumondii (strain DSM 15139 / CIP 105565 / TT01) (Photorhabdus luminescens subsp. laumondii) protein is HTH-type transcriptional repressor PurR.